The following is a 318-amino-acid chain: Protein RecA (318 aa).

53-60 is a binding site for ATP; that stretch reads GPESSGKT.

Belongs to the RecA family.

The protein resides in the cytoplasm. Functionally, can catalyze the hydrolysis of ATP in the presence of single-stranded DNA, the ATP-dependent uptake of single-stranded DNA by duplex DNA, and the ATP-dependent hybridization of homologous single-stranded DNAs. It interacts with LexA causing its activation and leading to its autocatalytic cleavage. In Bacteroides fragilis (strain YCH46), this protein is Protein RecA.